The chain runs to 309 residues: L-aminoadipate-semialdehyde dehydrogenase-phosphopantetheinyl transferase (309 aa).

CoA is bound by residues R47, 86-91, and 108-111; these read RTSKGK and NISH. Residues D129 and E181 each contribute to the Mg(2+) site. 181 to 185 is a CoA binding site; that stretch reads ESFIK.

The protein belongs to the P-Pant transferase superfamily. AcpS family. In terms of assembly, monomer. The cofactor is Mg(2+).

It is found in the cytoplasm. The protein resides in the cytosol. It carries out the reaction apo-[ACP] + CoA = holo-[ACP] + adenosine 3',5'-bisphosphate + H(+). It catalyses the reaction apo-[ACP] + acetyl-CoA = acetyl-[ACP] + adenosine 3',5'-bisphosphate + H(+). Catalyzes the post-translational modification of target proteins by phosphopantetheine. Can transfer the 4'-phosphopantetheine moiety from coenzyme A, regardless of whether the CoA is presented in the free thiol form or as an acetyl thioester, to a serine residue of a broad range of acceptors including the acyl carrier domain of FASN. This chain is L-aminoadipate-semialdehyde dehydrogenase-phosphopantetheinyl transferase (Aasdhppt), found in Rattus norvegicus (Rat).